A 313-amino-acid chain; its full sequence is MNSSNLLMECIKSEKIESGPMYGQFLIDSLSSGQGITIGNLLRRVLLGDLQGTAITGVRIAGVKDEFSLIPGVREDILEILLNLKGIVLKSKTPNRQFGRLRLQGPAVITASSIQLPPEIEIINPNHYIATISSSHILEIEFKIESGSKYRLANELFSDKFEDFIETDAIFMPVQKVDFKVENVYDNSNNIKERLLIDIWTNGSISPEQAIFSGSNLIINLFKSIGEQKINKEKENIKEKNHIKPIDPYTHIAIEELQLSVRPYNCLKRAQINTIGDLLDYSPEKLLELKNFGRKSADEVFATLKNKLGIVLK.

Positions 1 to 229 (MNSSNLLMEC…NLFKSIGEQK (229 aa)) are alpha N-terminal domain (alpha-NTD). The interval 243-313 (IKPIDPYTHI…LKNKLGIVLK (71 aa)) is alpha C-terminal domain (alpha-CTD).

Belongs to the RNA polymerase alpha chain family. As to quaternary structure, in plastids the minimal PEP RNA polymerase catalytic core is composed of four subunits: alpha, beta, beta', and beta''. When a (nuclear-encoded) sigma factor is associated with the core the holoenzyme is formed, which can initiate transcription.

The protein localises to the plastid. It is found in the chloroplast. The enzyme catalyses RNA(n) + a ribonucleoside 5'-triphosphate = RNA(n+1) + diphosphate. Functionally, DNA-dependent RNA polymerase catalyzes the transcription of DNA into RNA using the four ribonucleoside triphosphates as substrates. The polypeptide is DNA-directed RNA polymerase subunit alpha (Thalassiosira pseudonana (Marine diatom)).